An 84-amino-acid polypeptide reads, in one-letter code: Large ribosomal subunit protein bL27 (84 aa).

The tract at residues 1–25 is disordered; the sequence is MAHKKGQGSTQNNRDSAGRRLGVKK.

Belongs to the bacterial ribosomal protein bL27 family.

In Sulfurovum sp. (strain NBC37-1), this protein is Large ribosomal subunit protein bL27.